The following is a 496-amino-acid chain: Probable cytosol aminopeptidase (496 aa).

Residues Lys252 and Asp257 each contribute to the Mn(2+) site. Lys264 is a catalytic residue. Residues Asp275, Asp334, and Glu336 each contribute to the Mn(2+) site. Arg338 is a catalytic residue.

It belongs to the peptidase M17 family. Requires Mn(2+) as cofactor.

The protein localises to the cytoplasm. It catalyses the reaction Release of an N-terminal amino acid, Xaa-|-Yaa-, in which Xaa is preferably Leu, but may be other amino acids including Pro although not Arg or Lys, and Yaa may be Pro. Amino acid amides and methyl esters are also readily hydrolyzed, but rates on arylamides are exceedingly low.. The enzyme catalyses Release of an N-terminal amino acid, preferentially leucine, but not glutamic or aspartic acids.. In terms of biological role, presumably involved in the processing and regular turnover of intracellular proteins. Catalyzes the removal of unsubstituted N-terminal amino acids from various peptides. The sequence is that of Probable cytosol aminopeptidase from Leifsonia xyli subsp. xyli (strain CTCB07).